We begin with the raw amino-acid sequence, 534 residues long: CTP synthase (534 aa).

Residues 1 to 266 (MKTKFLFITG…DERIIDYLNI (266 aa)) form an amidoligase domain region. A CTP-binding site is contributed by Ser14. Ser14 is a binding site for UTP. Residues 15 to 20 (SLGKGL) and Asp72 each bind ATP. Residues Asp72 and Glu140 each coordinate Mg(2+). CTP-binding positions include 147 to 149 (DIE), 187 to 192 (KTKPTQ), and Lys223. Residues 187–192 (KTKPTQ) and Lys223 each bind UTP. 239-241 (RDV) contributes to the ATP binding site. The Glutamine amidotransferase type-1 domain maps to 291 to 533 (TIAIVGKYVE…VGASLKHHGE (243 aa)). Position 353 (Gly353) interacts with L-glutamine. The active-site Nucleophile; for glutamine hydrolysis is the Cys380. L-glutamine contacts are provided by residues 381–384 (LGMQ), Glu404, and Arg461. Active-site residues include His506 and Glu508.

This sequence belongs to the CTP synthase family. In terms of assembly, homotetramer.

It catalyses the reaction UTP + L-glutamine + ATP + H2O = CTP + L-glutamate + ADP + phosphate + 2 H(+). The catalysed reaction is L-glutamine + H2O = L-glutamate + NH4(+). It carries out the reaction UTP + NH4(+) + ATP = CTP + ADP + phosphate + 2 H(+). The protein operates within pyrimidine metabolism; CTP biosynthesis via de novo pathway; CTP from UDP: step 2/2. Allosterically activated by GTP, when glutamine is the substrate; GTP has no effect on the reaction when ammonia is the substrate. The allosteric effector GTP functions by stabilizing the protein conformation that binds the tetrahedral intermediate(s) formed during glutamine hydrolysis. Inhibited by the product CTP, via allosteric rather than competitive inhibition. Its function is as follows. Catalyzes the ATP-dependent amination of UTP to CTP with either L-glutamine or ammonia as the source of nitrogen. Regulates intracellular CTP levels through interactions with the four ribonucleotide triphosphates. In Syntrophotalea carbinolica (strain DSM 2380 / NBRC 103641 / GraBd1) (Pelobacter carbinolicus), this protein is CTP synthase.